Here is a 126-residue protein sequence, read N- to C-terminus: Sperm acrosome membrane-associated protein 4 (126 aa).

A signal peptide spans 1–19 (MVLGWLPLLVMVLAPGTTG). 5 disulfide bridges follow: C23–C47, C26–C34, C41–C65, C71–C90, and C91–C96. The UPAR/Ly6 domain occupies 23 to 97 (CVFCELTDST…TNCCTGHMCN (75 aa)). The GPI-anchor amidated asparagine moiety is linked to residue N97. Positions 98-126 (GAPDPTRGRLAGAAASLALGVLLLLQHVL) are cleaved as a propeptide — removed in mature form.

It belongs to the SPACA4/bouncer family.

The protein resides in the cell membrane. Its subcellular location is the cytoplasmic vesicle. The protein localises to the secretory vesicle. It localises to the acrosome. It is found in the acrosome inner membrane. The protein resides in the acrosome outer membrane. Functionally, sperm surface membrane protein that is essential for effective sperm-zona pellucida binding and penetration during fertilization. The protein is Sperm acrosome membrane-associated protein 4 (SPACA4) of Bos taurus (Bovine).